Consider the following 258-residue polypeptide: UPF0758 protein Bamb_2548 (258 aa).

Residues 1-43 form a disordered region; that stretch reads MLSPCLAAPATECRDPADAPAAPARHTGPARPRKRRPRNWKPH. The segment covering 31–43 has biased composition (basic residues); sequence RPRKRRPRNWKPH. Residues 136-258 enclose the MPN domain; the sequence is QIDSPGAVED…TFSFARAGWL (123 aa). Residues His-207, His-209, and Asp-220 each contribute to the Zn(2+) site. A JAMM motif motif is present at residues 207–220; sequence HNHPSGAVQPSAED.

It belongs to the UPF0758 family.

The sequence is that of UPF0758 protein Bamb_2548 from Burkholderia ambifaria (strain ATCC BAA-244 / DSM 16087 / CCUG 44356 / LMG 19182 / AMMD) (Burkholderia cepacia (strain AMMD)).